Here is a 251-residue protein sequence, read N- to C-terminus: 3-deoxy-manno-octulosonate cytidylyltransferase (251 aa).

This sequence belongs to the KdsB family.

It is found in the cytoplasm. It carries out the reaction 3-deoxy-alpha-D-manno-oct-2-ulosonate + CTP = CMP-3-deoxy-beta-D-manno-octulosonate + diphosphate. The protein operates within nucleotide-sugar biosynthesis; CMP-3-deoxy-D-manno-octulosonate biosynthesis; CMP-3-deoxy-D-manno-octulosonate from 3-deoxy-D-manno-octulosonate and CTP: step 1/1. It functions in the pathway bacterial outer membrane biogenesis; lipopolysaccharide biosynthesis. Activates KDO (a required 8-carbon sugar) for incorporation into bacterial lipopolysaccharide in Gram-negative bacteria. This is 3-deoxy-manno-octulosonate cytidylyltransferase from Chromobacterium violaceum (strain ATCC 12472 / DSM 30191 / JCM 1249 / CCUG 213 / NBRC 12614 / NCIMB 9131 / NCTC 9757 / MK).